Here is a 256-residue protein sequence, read N- to C-terminus: tRNA-cytidine(32) 2-sulfurtransferase (256 aa).

The short motif at 35-40 (SGGKDS) is the PP-loop motif element. Residues Cys110, Cys113, and Cys201 each contribute to the [4Fe-4S] cluster site.

It belongs to the TtcA family. As to quaternary structure, homodimer. Mg(2+) serves as cofactor. Requires [4Fe-4S] cluster as cofactor.

It is found in the cytoplasm. The catalysed reaction is cytidine(32) in tRNA + S-sulfanyl-L-cysteinyl-[cysteine desulfurase] + AH2 + ATP = 2-thiocytidine(32) in tRNA + L-cysteinyl-[cysteine desulfurase] + A + AMP + diphosphate + H(+). It functions in the pathway tRNA modification. Catalyzes the ATP-dependent 2-thiolation of cytidine in position 32 of tRNA, to form 2-thiocytidine (s(2)C32). The sulfur atoms are provided by the cysteine/cysteine desulfurase (IscS) system. The sequence is that of tRNA-cytidine(32) 2-sulfurtransferase from Coxiella burnetii (strain Dugway 5J108-111).